Consider the following 112-residue polypeptide: Large ribosomal subunit protein uL22 (112 aa).

It belongs to the universal ribosomal protein uL22 family. Part of the 50S ribosomal subunit.

This protein binds specifically to 23S rRNA; its binding is stimulated by other ribosomal proteins, e.g. L4, L17, and L20. It is important during the early stages of 50S assembly. It makes multiple contacts with different domains of the 23S rRNA in the assembled 50S subunit and ribosome. Functionally, the globular domain of the protein is located near the polypeptide exit tunnel on the outside of the subunit, while an extended beta-hairpin is found that lines the wall of the exit tunnel in the center of the 70S ribosome. The polypeptide is Large ribosomal subunit protein uL22 (Anaplasma marginale (strain Florida)).